Here is a 330-residue protein sequence, read N- to C-terminus: Ketol-acid reductoisomerase (NADP(+)) (330 aa).

In terms of domain architecture, KARI N-terminal Rossmann spans 2-182 (VKVYYDADAN…GCTKAGVFET (181 aa)). Residues 25–28 (YGSQ), R48, S51, and 83–86 (DEIQ) contribute to the NADP(+) site. H108 is an active-site residue. G134 contributes to the NADP(+) binding site. Residues 183–328 (SFREETETDL…ARLREMMPWL (146 aa)) form the KARI C-terminal knotted domain. Mg(2+)-binding residues include D191, E195, E227, and E231. Position 252 (S252) interacts with substrate.

This sequence belongs to the ketol-acid reductoisomerase family. Mg(2+) serves as cofactor.

The catalysed reaction is (2R)-2,3-dihydroxy-3-methylbutanoate + NADP(+) = (2S)-2-acetolactate + NADPH + H(+). The enzyme catalyses (2R,3R)-2,3-dihydroxy-3-methylpentanoate + NADP(+) = (S)-2-ethyl-2-hydroxy-3-oxobutanoate + NADPH + H(+). It participates in amino-acid biosynthesis; L-isoleucine biosynthesis; L-isoleucine from 2-oxobutanoate: step 2/4. It functions in the pathway amino-acid biosynthesis; L-valine biosynthesis; L-valine from pyruvate: step 2/4. Functionally, involved in the biosynthesis of branched-chain amino acids (BCAA). Catalyzes an alkyl-migration followed by a ketol-acid reduction of (S)-2-acetolactate (S2AL) to yield (R)-2,3-dihydroxy-isovalerate. In the isomerase reaction, S2AL is rearranged via a Mg-dependent methyl migration to produce 3-hydroxy-3-methyl-2-ketobutyrate (HMKB). In the reductase reaction, this 2-ketoacid undergoes a metal-dependent reduction by NADPH to yield (R)-2,3-dihydroxy-isovalerate. This chain is Ketol-acid reductoisomerase (NADP(+)), found in Desulforamulus reducens (strain ATCC BAA-1160 / DSM 100696 / MI-1) (Desulfotomaculum reducens).